Here is a 292-residue protein sequence, read N- to C-terminus: Protein CHLOROPLAST ENHANCING STRESS TOLERANCE, chloroplastic (292 aa).

The segment covering 1–15 (MALLSPPSPPPPLPP) has biased composition (pro residues). A chloroplast-targeting transit peptide spans 1 to 67 (MALLSPPSPP…RSSRRRRRVA (67 aa)). Disordered stretches follow at residues 1–119 (MALL…DLED) and 206–225 (MEAP…KATD). 2 stretches are compositionally biased toward low complexity: residues 49–58 (STANARAYSR) and 94–107 (ASSD…ASSA). The helical transmembrane segment at 267–287 (ALYLLTAFPVIIGISVVLILF) threads the bilayer.

The protein belongs to the Y3IP1/CEST family.

The protein resides in the plastid. It localises to the chloroplast thylakoid membrane. Involved in light-induced chloroplast development and growth. Involved in the plant response to abiotic and photooxidative stresses. May be involved in the suppression of photooxidative damage. The protein is Protein CHLOROPLAST ENHANCING STRESS TOLERANCE, chloroplastic of Oryza sativa subsp. indica (Rice).